A 121-amino-acid chain; its full sequence is Small ribosomal subunit protein uS13 (121 aa).

Residues 90 to 121 (RHRRGLPTRGQNTKNNARTRKGPTKTVAGKKK) are disordered. The segment covering 106–121 (ARTRKGPTKTVAGKKK) has biased composition (basic residues).

The protein belongs to the universal ribosomal protein uS13 family. Part of the 30S ribosomal subunit. Forms a loose heterodimer with protein S19. Forms two bridges to the 50S subunit in the 70S ribosome.

In terms of biological role, located at the top of the head of the 30S subunit, it contacts several helices of the 16S rRNA. In the 70S ribosome it contacts the 23S rRNA (bridge B1a) and protein L5 of the 50S subunit (bridge B1b), connecting the 2 subunits; these bridges are implicated in subunit movement. Contacts the tRNAs in the A and P-sites. The polypeptide is Small ribosomal subunit protein uS13 (Enterococcus faecalis (strain ATCC 700802 / V583)).